Reading from the N-terminus, the 231-residue chain is Probable septum site-determining protein MinC (231 aa).

It belongs to the MinC family. Interacts with MinD and FtsZ.

Cell division inhibitor that blocks the formation of polar Z ring septums. Rapidly oscillates between the poles of the cell to destabilize FtsZ filaments that have formed before they mature into polar Z rings. Prevents FtsZ polymerization. The protein is Probable septum site-determining protein MinC of Bradyrhizobium diazoefficiens (strain JCM 10833 / BCRC 13528 / IAM 13628 / NBRC 14792 / USDA 110).